Reading from the N-terminus, the 269-residue chain is 4-hydroxy-tetrahydrodipicolinate reductase (269 aa).

NAD(+) contacts are provided by residues 13–18 (GASGRM) and Asp39. Arg40 lines the NADP(+) pocket. NAD(+) is bound by residues 101-103 (GTT) and 125-128 (APNM). His158 functions as the Proton donor/acceptor in the catalytic mechanism. His159 is a (S)-2,3,4,5-tetrahydrodipicolinate binding site. The active-site Proton donor is Lys162. 168 to 169 (GT) contacts (S)-2,3,4,5-tetrahydrodipicolinate.

The protein belongs to the DapB family.

The protein resides in the cytoplasm. It catalyses the reaction (S)-2,3,4,5-tetrahydrodipicolinate + NAD(+) + H2O = (2S,4S)-4-hydroxy-2,3,4,5-tetrahydrodipicolinate + NADH + H(+). It carries out the reaction (S)-2,3,4,5-tetrahydrodipicolinate + NADP(+) + H2O = (2S,4S)-4-hydroxy-2,3,4,5-tetrahydrodipicolinate + NADPH + H(+). The protein operates within amino-acid biosynthesis; L-lysine biosynthesis via DAP pathway; (S)-tetrahydrodipicolinate from L-aspartate: step 4/4. Its function is as follows. Catalyzes the conversion of 4-hydroxy-tetrahydrodipicolinate (HTPA) to tetrahydrodipicolinate. The polypeptide is 4-hydroxy-tetrahydrodipicolinate reductase (Bordetella bronchiseptica (strain ATCC BAA-588 / NCTC 13252 / RB50) (Alcaligenes bronchisepticus)).